The sequence spans 569 residues: Sulfite reductase [NADPH] hemoprotein beta-component (569 aa).

[4Fe-4S] cluster contacts are provided by C434, C440, C479, and C483. C483 is a binding site for siroheme.

Belongs to the nitrite and sulfite reductase 4Fe-4S domain family. Alpha(8)-beta(8). The alpha component is a flavoprotein, the beta component is a hemoprotein. Siroheme serves as cofactor. The cofactor is [4Fe-4S] cluster.

The enzyme catalyses hydrogen sulfide + 3 NADP(+) + 3 H2O = sulfite + 3 NADPH + 4 H(+). Its pathway is sulfur metabolism; hydrogen sulfide biosynthesis; hydrogen sulfide from sulfite (NADPH route): step 1/1. Functionally, component of the sulfite reductase complex that catalyzes the 6-electron reduction of sulfite to sulfide. This is one of several activities required for the biosynthesis of L-cysteine from sulfate. The sequence is that of Sulfite reductase [NADPH] hemoprotein beta-component from Staphylococcus saprophyticus subsp. saprophyticus (strain ATCC 15305 / DSM 20229 / NCIMB 8711 / NCTC 7292 / S-41).